The primary structure comprises 86 residues: Toxin Aam2 (86 aa).

The N-terminal stretch at 1–20 (MNYLITISLALLLMTGVASG) is a signal peptide. In terms of domain architecture, LCN-type CS-alpha/beta spans 22–84 (RDGYIADAGN…VPIKVPGKCN (63 aa)). Cystine bridges form between Cys32/Cys83, Cys36/Cys56, Cys42/Cys66, and Cys46/Cys68. Asn84 bears the Asparagine amide mark.

Belongs to the long (4 C-C) scorpion toxin superfamily. Sodium channel inhibitor family. Alpha subfamily. In terms of tissue distribution, expressed by the venom gland.

Its subcellular location is the secreted. In terms of biological role, alpha toxins bind voltage-independently at site-3 of sodium channels (Nav) and inhibit the inactivation of the activated channels, thereby blocking neuronal transmission. This chain is Toxin Aam2, found in Androctonus amoreuxi (African fattail scorpion).